Reading from the N-terminus, the 239-residue chain is Probable transcriptional regulatory protein BBR47_14810 (239 aa).

It belongs to the TACO1 family. YeeN subfamily.

It localises to the cytoplasm. The protein is Probable transcriptional regulatory protein BBR47_14810 of Brevibacillus brevis (strain 47 / JCM 6285 / NBRC 100599).